The sequence spans 460 residues: Ribosomal protein uS12 methylthiotransferase RimO (460 aa).

The region spanning Asn16–Ser130 is the MTTase N-terminal domain. Residues Cys25, Cys61, Cys93, Cys164, Cys168, and Cys171 each coordinate [4Fe-4S] cluster. The Radical SAM core domain maps to Ser150–Lys382. In terms of domain architecture, TRAM spans Lys385 to Asn455.

Belongs to the methylthiotransferase family. RimO subfamily. The cofactor is [4Fe-4S] cluster.

It localises to the cytoplasm. It catalyses the reaction L-aspartate(89)-[ribosomal protein uS12]-hydrogen + (sulfur carrier)-SH + AH2 + 2 S-adenosyl-L-methionine = 3-methylsulfanyl-L-aspartate(89)-[ribosomal protein uS12]-hydrogen + (sulfur carrier)-H + 5'-deoxyadenosine + L-methionine + A + S-adenosyl-L-homocysteine + 2 H(+). Functionally, catalyzes the methylthiolation of an aspartic acid residue of ribosomal protein uS12. The sequence is that of Ribosomal protein uS12 methylthiotransferase RimO from Chlamydia abortus (strain DSM 27085 / S26/3) (Chlamydophila abortus).